The chain runs to 363 residues: Phosphoribosylformylglycinamidine cyclo-ligase (363 aa).

The protein belongs to the AIR synthase family.

The protein resides in the cytoplasm. The catalysed reaction is 2-formamido-N(1)-(5-O-phospho-beta-D-ribosyl)acetamidine + ATP = 5-amino-1-(5-phospho-beta-D-ribosyl)imidazole + ADP + phosphate + H(+). Its pathway is purine metabolism; IMP biosynthesis via de novo pathway; 5-amino-1-(5-phospho-D-ribosyl)imidazole from N(2)-formyl-N(1)-(5-phospho-D-ribosyl)glycinamide: step 2/2. This chain is Phosphoribosylformylglycinamidine cyclo-ligase, found in Brucella anthropi (strain ATCC 49188 / DSM 6882 / CCUG 24695 / JCM 21032 / LMG 3331 / NBRC 15819 / NCTC 12168 / Alc 37) (Ochrobactrum anthropi).